The sequence spans 334 residues: Phenylalanine--tRNA ligase alpha subunit (334 aa).

Residue E249 participates in Mg(2+) binding.

This sequence belongs to the class-II aminoacyl-tRNA synthetase family. Phe-tRNA synthetase alpha subunit type 1 subfamily. Tetramer of two alpha and two beta subunits. Mg(2+) serves as cofactor.

It is found in the cytoplasm. The enzyme catalyses tRNA(Phe) + L-phenylalanine + ATP = L-phenylalanyl-tRNA(Phe) + AMP + diphosphate + H(+). The protein is Phenylalanine--tRNA ligase alpha subunit of Desulfosudis oleivorans (strain DSM 6200 / JCM 39069 / Hxd3) (Desulfococcus oleovorans).